Consider the following 331-residue polypeptide: tRNA-modifying protein YgfZ (331 aa).

Residues Trp-28 and Trp-191 each contribute to the folate site.

It belongs to the tRNA-modifying YgfZ family.

Its subcellular location is the cytoplasm. Folate-binding protein involved in regulating the level of ATP-DnaA and in the modification of some tRNAs. It is probably a key factor in regulatory networks that act via tRNA modification, such as initiation of chromosomal replication. The protein is tRNA-modifying protein YgfZ of Edwardsiella ictaluri (strain 93-146).